A 195-amino-acid polypeptide reads, in one-letter code: Heterogeneous nuclear ribonucleoprotein A/B (195 aa).

The tract at residues 1-23 (EEVADGQAHGEXVYREEHHEGEK) is disordered. The segment covering 12–23 (XVYREEHHEGEK) has biased composition (basic and acidic residues). The region spanning 32-48 (EETKLFVGALSWETTEK) is the RRM domain. Residues Arg119 and Arg122 each carry the asymmetric dimethylarginine modification. Ser173 is subject to Phosphoserine; by CK2.

Extensively phosphorylated on tyrosine residues.

The protein resides in the cytoplasm. It localises to the nucleus. Functionally, may regulate mRNA translation and stability. It binds to poly(A) and poly(U) regions of RNA. This binding is inhibited when the protein is phosphorylated. The chain is Heterogeneous nuclear ribonucleoprotein A/B from Artemia salina (Brine shrimp).